The sequence spans 720 residues: Ciliated left-right organizer metallopeptidase (720 aa).

An N-terminal signal peptide occupies residues methionine 1–serine 25. Residues alanine 26–serine 668 lie on the Extracellular side of the membrane. Residue histidine 243 coordinates Zn(2+). Residue glutamate 244 is part of the active site. Histidine 247 and histidine 322 together coordinate Zn(2+). Residues tyrosine 669–tryptophan 689 traverse the membrane as a helical segment. The Cytoplasmic portion of the chain corresponds to tyrosine 690–valine 720.

It belongs to the peptidase M8 family. It depends on Zn(2+) as a cofactor.

The protein localises to the membrane. In terms of biological role, putative metalloprotease playing a role in the process of LR patterning. The sequence is that of Ciliated left-right organizer metallopeptidase (cirop) from Xenopus laevis (African clawed frog).